Reading from the N-terminus, the 227-residue chain is YEATS domain-containing protein 4 (227 aa).

The 144-residue stretch at Arg15 to Ser158 folds into the YEATS domain. Lys37 participates in a covalent cross-link: Glycyl lysine isopeptide (Lys-Gly) (interchain with G-Cter in SUMO2). The tract at residues Trp93–Glu97 is diacetylated histone H3 binding. The tract at residues Leu163–Ile227 is interaction with MLLT10. The segment at His168–Ile227 is interaction with TACC1. A coiled-coil region spans residues Lys178–Asp226.

Component of numerous complexes with chromatin remodeling and histone acetyltransferase activity. Component of the NuA4 histone acetyltransferase complex which contains the catalytic subunit KAT5/TIP60 and the subunits EP400, TRRAP/PAF400, BRD8/SMAP, EPC1, DMAP1/DNMAP1, RUVBL1/TIP49, RUVBL2, ING3, actin, ACTL6A/BAF53A, MORF4L1/MRG15, MORF4L2/MRGX, MRGBP, YEATS4/GAS41, VPS72/YL1 and MEAF6. The NuA4 complex interacts with MYC and the adenovirus E1A protein. Component of a NuA4-related complex which contains EP400, TRRAP/PAF400, SRCAP, BRD8/SMAP, EPC1, DMAP1/DNMAP1, RUVBL1/TIP49, RUVBL2, actin, ACTL6A/BAF53A, VPS72 and YEATS4/GAS41. Interacts with MLLT10/AF10. Also interacts with the SWI/SNF component SMARCB1/BAF47, TACC1 and TACC2, and the nuclear matrix protein NUMA1. Expressed in brain, heart, kidney, liver, lung, pancreas, placenta and skeletal muscle.

The protein resides in the nucleus. Functionally, chromatin reader component of the NuA4 histone acetyltransferase (HAT) complex, a complex involved in transcriptional activation of select genes principally by acetylation of nucleosomal histones H4 and H2A. Specifically recognizes and binds acylated histone H3, with a preference for histone H3 diacetylated at 'Lys-18' and 'Lys-27' (H3K18ac and H3K27ac) or histone H3 diacetylated at 'Lys-14' and 'Lys-27' (H3K14ac and H3K27ac). Also able to recognize and bind crotonylated histone H3. May also recognize and bind histone H3 succinylated at 'Lys-122' (H3K122succ); additional evidences are however required to confirm this result in vivo. Plays a key role in histone variant H2AZ1/H2A.Z deposition into specific chromatin regions: recognizes and binds H3K14ac and H3K27ac on the promoters of actively transcribed genes and recruits NuA4-related complex to deposit H2AZ1/H2A.Z. H2AZ1/H2A.Z deposition is required for maintenance of embryonic stem cell. This Homo sapiens (Human) protein is YEATS domain-containing protein 4.